The sequence spans 31 residues: MALTDTQVYVALVIALLPAVLAFRLSTELYK.

A helical transmembrane segment spans residues 7-26 (QVYVALVIALLPAVLAFRLS).

The protein belongs to the PsaM family.

It is found in the cellular thylakoid membrane. The polypeptide is Photosystem I reaction center subunit XII (Thermosynechococcus vestitus (strain NIES-2133 / IAM M-273 / BP-1)).